The primary structure comprises 377 residues: Glutamate 5-kinase (377 aa).

Position 20 (K20) interacts with ATP. 3 residues coordinate substrate: S60, D147, and N159. Residue 179-180 (TD) coordinates ATP. The 79-residue stretch at 285-363 (AGRLVIDAGA…DKVHQVLGEA (79 aa)) folds into the PUA domain.

This sequence belongs to the glutamate 5-kinase family.

The protein localises to the cytoplasm. It carries out the reaction L-glutamate + ATP = L-glutamyl 5-phosphate + ADP. The protein operates within amino-acid biosynthesis; L-proline biosynthesis; L-glutamate 5-semialdehyde from L-glutamate: step 1/2. Its function is as follows. Catalyzes the transfer of a phosphate group to glutamate to form L-glutamate 5-phosphate. The sequence is that of Glutamate 5-kinase from Acinetobacter baylyi (strain ATCC 33305 / BD413 / ADP1).